A 496-amino-acid chain; its full sequence is Probable cytosol aminopeptidase (496 aa).

Residues K268 and D273 each contribute to the Mn(2+) site. K280 is a catalytic residue. Mn(2+) is bound by residues D291, D350, and E352. R354 is an active-site residue.

This sequence belongs to the peptidase M17 family. Mn(2+) is required as a cofactor.

Its subcellular location is the cytoplasm. The enzyme catalyses Release of an N-terminal amino acid, Xaa-|-Yaa-, in which Xaa is preferably Leu, but may be other amino acids including Pro although not Arg or Lys, and Yaa may be Pro. Amino acid amides and methyl esters are also readily hydrolyzed, but rates on arylamides are exceedingly low.. It carries out the reaction Release of an N-terminal amino acid, preferentially leucine, but not glutamic or aspartic acids.. In terms of biological role, presumably involved in the processing and regular turnover of intracellular proteins. Catalyzes the removal of unsubstituted N-terminal amino acids from various peptides. The chain is Probable cytosol aminopeptidase from Thioalkalivibrio sulfidiphilus (strain HL-EbGR7).